The chain runs to 282 residues: Glutamyl endopeptidase (282 aa).

Positions 1-27 (MKKRFLSICTMTIAALATTTMVNTSYA) are cleaved as a signal peptide. A propeptide spanning residues 28–66 (KTDTESHNHSSLGTENKNVLDINSSSHNIKPSQNKSYPS) is cleaved from the precursor. Active-site charge relay system residues include H117, D159, and S235.

It belongs to the peptidase S1B family.

It localises to the secreted. The catalysed reaction is Preferential cleavage: Glu-|-Xaa, Asp-|-Xaa.. In terms of biological role, exhibits a significant hydrolytic activity for the carbonyl side of glutamic acid. Shows activity toward human fibronectin and type 1 collagen. The chain is Glutamyl endopeptidase (gseA) from Staphylococcus epidermidis (strain ATCC 35984 / DSM 28319 / BCRC 17069 / CCUG 31568 / BM 3577 / RP62A).